Consider the following 176-residue polypeptide: NAD(P)H-quinone oxidoreductase subunit 6, chloroplastic (176 aa).

The next 5 helical transmembrane spans lie at 10-30 (ILVLFGGFVLLLGGLGVVLLT), 33-53 (TFSAFSLGLVLVCISLFYILL), 60-80 (VAQLLIYVGAINVLIIFAVMF), 92-112 (FWTIGDGFTSLVCITIPFSLM), and 152-172 (FYLPFELISIILLVSLIGAIT).

It belongs to the complex I subunit 6 family. NDH is composed of at least 16 different subunits, 5 of which are encoded in the nucleus.

The protein localises to the plastid. It is found in the chloroplast thylakoid membrane. It carries out the reaction a plastoquinone + NADH + (n+1) H(+)(in) = a plastoquinol + NAD(+) + n H(+)(out). It catalyses the reaction a plastoquinone + NADPH + (n+1) H(+)(in) = a plastoquinol + NADP(+) + n H(+)(out). Functionally, NDH shuttles electrons from NAD(P)H:plastoquinone, via FMN and iron-sulfur (Fe-S) centers, to quinones in the photosynthetic chain and possibly in a chloroplast respiratory chain. The immediate electron acceptor for the enzyme in this species is believed to be plastoquinone. Couples the redox reaction to proton translocation, and thus conserves the redox energy in a proton gradient. This is NAD(P)H-quinone oxidoreductase subunit 6, chloroplastic (ndhG) from Oryza nivara (Indian wild rice).